Consider the following 474-residue polypeptide: Protein nucleotidyltransferase YdiU (474 aa).

Positions 89, 91, 92, 112, 124, 125, 175, and 182 each coordinate ATP. The active-site Proton acceptor is the Asp256. Asn257 and Asp266 together coordinate Mg(2+). Residue Asp266 participates in ATP binding.

It belongs to the SELO family. Mg(2+) is required as a cofactor. Requires Mn(2+) as cofactor.

The enzyme catalyses L-seryl-[protein] + ATP = 3-O-(5'-adenylyl)-L-seryl-[protein] + diphosphate. It catalyses the reaction L-threonyl-[protein] + ATP = 3-O-(5'-adenylyl)-L-threonyl-[protein] + diphosphate. The catalysed reaction is L-tyrosyl-[protein] + ATP = O-(5'-adenylyl)-L-tyrosyl-[protein] + diphosphate. It carries out the reaction L-histidyl-[protein] + UTP = N(tele)-(5'-uridylyl)-L-histidyl-[protein] + diphosphate. The enzyme catalyses L-seryl-[protein] + UTP = O-(5'-uridylyl)-L-seryl-[protein] + diphosphate. It catalyses the reaction L-tyrosyl-[protein] + UTP = O-(5'-uridylyl)-L-tyrosyl-[protein] + diphosphate. In terms of biological role, nucleotidyltransferase involved in the post-translational modification of proteins. It can catalyze the addition of adenosine monophosphate (AMP) or uridine monophosphate (UMP) to a protein, resulting in modifications known as AMPylation and UMPylation. This chain is Protein nucleotidyltransferase YdiU, found in Corynebacterium glutamicum (strain R).